The sequence spans 91 residues: Probable Fe(2+)-trafficking protein (91 aa).

It belongs to the Fe(2+)-trafficking protein family.

In terms of biological role, could be a mediator in iron transactions between iron acquisition and iron-requiring processes, such as synthesis and/or repair of Fe-S clusters in biosynthetic enzymes. The polypeptide is Probable Fe(2+)-trafficking protein (Shewanella denitrificans (strain OS217 / ATCC BAA-1090 / DSM 15013)).